A 411-amino-acid chain; its full sequence is ACT domain-containing protein ACR9 (411 aa).

ACT domains lie at 22–105 (VVTV…NVSK), 111–194 (LLKF…LAGP), and 243–322 (LLQI…VIIV).

Its function is as follows. May bind amino acids. The protein is ACT domain-containing protein ACR9 of Arabidopsis thaliana (Mouse-ear cress).